Reading from the N-terminus, the 617-residue chain is Vitamin B12 transporter BtuB (617 aa).

An N-terminal signal peptide occupies residues 1-22 (MRKTFLAITCASLLSPTFYSQA). Positions 29–36 (ETVVVTAN) match the TonB box motif. In terms of domain architecture, TBDR plug spans 40 to 154 (QIDGAVLAQT…ISGVINIITR (115 aa)). One can recognise a TBDR beta-barrel domain in the interval 159-617 (DDSGRVSAGY…QYFVSADYRF (459 aa)). The short motif at 600-617 (VGYVTPGRQYFVSADYRF) is the TonB C-terminal box element.

Belongs to the TonB-dependent receptor family. BtuB (TC 1.B.14.3.1) subfamily.

The protein resides in the cell outer membrane. Functionally, involved in the active translocation of vitamin B12 (cyanocobalamin) across the outer membrane to the periplasmic space. It derives its energy for transport by interacting with the trans-periplasmic membrane protein TonB. This chain is Vitamin B12 transporter BtuB, found in Vibrio campbellii (strain ATCC BAA-1116).